The following is a 506-amino-acid chain: RGLAGRGSVQVPKDCQAGIYLKTLDLRDMVSGFSGIQYEKWITAGIVMPNFKVVIRYPANAFTGITWVMSFDAYNRITSSISTTASPAYTLSVPHWLLHHKNGTTSCDLDYGELCGHAMWFGATTFESPKLHFTCLTGNNKELAADWEFVVELYAEFEAAKSFLGKPNFIYSLDAFNGSLKFLTIPPLEYDLSATSAYKSVSLLLGQTLVDGTHKVYNFNNTLLSYYLGIGGIVKGKVHVCSPCTYGIVLRVVSEWNGVTNNWNQLFKYPGCYIEEDGSFAIEIRSPYHRTPLRLIDAQSASSFTSTLNFYAISGPIAPSGETAKMPVVVQIEEIALPDLSVPSFPNDYFLWVDFSSFTVDVEEYVIGSRFFDISSTTSTVALGDNPFAHMIACHGLHHGILDLKLMWDLEGEFGKSSGGVTITKLCGDKATGMDGASRVCALQNMGCETELYIGNYAGANPNTALSLYSRWLAIKLDKAKSMKMLRILCKPRGNFEFYGRTCFKV.

It belongs to the nepoviruses RNA2 polyprotein family. In terms of processing, specific enzymatic cleavages in vivo by the P1 encoded 3C-like protease yield mature proteins.

The protein localises to the host cell junction. It is found in the host plasmodesma. Its subcellular location is the virion. Functionally, the movement protein is assembled into tubules that allow the transport of virions from cell to cell. The sequence is that of RNA2 polyprotein from Beta vulgaris subsp. vulgaris (Beet).